A 103-amino-acid polypeptide reads, in one-letter code: N(4)-acetylcytidine amidohydrolase (103 aa).

The ASCH domain occupies 6-100; that stretch reads ITFFQRFQED…AEDRFYVIEF (95 aa). Catalysis depends on lysine 21, which acts as the Proton acceptor. Threonine 24 acts as the Nucleophile in catalysis. Glutamate 74 serves as the catalytic Proton donor.

This sequence belongs to the N(4)-acetylcytidine amidohydrolase family.

It catalyses the reaction N(4)-acetylcytidine + H2O = cytidine + acetate + H(+). The enzyme catalyses N(4)-acetyl-2'-deoxycytidine + H2O = 2'-deoxycytidine + acetate + H(+). It carries out the reaction N(4)-acetylcytosine + H2O = cytosine + acetate + H(+). Its function is as follows. Catalyzes the hydrolysis of N(4)-acetylcytidine (ac4C). In Klebsiella pneumoniae (strain 342), this protein is N(4)-acetylcytidine amidohydrolase.